A 336-amino-acid chain; its full sequence is Phosphoribosylformylglycinamidine cyclo-ligase (336 aa).

The protein belongs to the AIR synthase family.

It localises to the cytoplasm. It carries out the reaction 2-formamido-N(1)-(5-O-phospho-beta-D-ribosyl)acetamidine + ATP = 5-amino-1-(5-phospho-beta-D-ribosyl)imidazole + ADP + phosphate + H(+). Its pathway is purine metabolism; IMP biosynthesis via de novo pathway; 5-amino-1-(5-phospho-D-ribosyl)imidazole from N(2)-formyl-N(1)-(5-phospho-D-ribosyl)glycinamide: step 2/2. The polypeptide is Phosphoribosylformylglycinamidine cyclo-ligase (Caldanaerobacter subterraneus subsp. tengcongensis (strain DSM 15242 / JCM 11007 / NBRC 100824 / MB4) (Thermoanaerobacter tengcongensis)).